A 128-amino-acid polypeptide reads, in one-letter code: Histone H2A (128 aa).

The interval Met1–Ala22 is disordered. Ser2 carries the N-acetylserine modification. Residue Ser2 is modified to Phosphoserine. N6-(2-hydroxyisobutyryl)lysine is present on Lys6. The residue at position 6 (Lys6) is an N6-acetyllysine. Residues Thr7 to Ser19 show a composition bias toward basic residues. Residue Lys10 is modified to N6-(2-hydroxyisobutyryl)lysine; alternate. At Lys10 the chain carries N6-lactoyllysine; alternate. The residue at position 10 (Lys10) is an N6-succinyllysine. Glycyl lysine isopeptide (Lys-Gly) (interchain with G-Cter in ubiquitin) cross-links involve residues Lys14 and Lys16. Position 37 is an N6-(2-hydroxyisobutyryl)lysine; alternate (Lys37). Lys75 and Lys76 each carry N6-(2-hydroxyisobutyryl)lysine. N6-(2-hydroxyisobutyryl)lysine; alternate is present on Lys96. The residue at position 96 (Lys96) is an N6-succinyllysine. Lys96 carries the post-translational modification N6-glutaryllysine; alternate. Gln105 carries the N5-methylglutamine modification. Lys119 is subject to N6-(2-hydroxyisobutyryl)lysine; alternate. An N6-glutaryllysine; alternate mark is found at Lys119, Lys120, and Lys126. Lys120 is covalently cross-linked (Glycyl lysine isopeptide (Lys-Gly) (interchain with G-Cter in ubiquitin)).

As to quaternary structure, the nucleosome is a histone octamer containing two molecules each of H2A, H2B, H3 and H4 assembled in one H3-H4 heterotetramer and two H2A-H2B heterodimers. The octamer wraps approximately 147 bp of DNA. Post-translationally, monoubiquitination of Lys-120 (H2AK119Ub) gives a specific tag for epigenetic transcriptional repression. Following DNA double-strand breaks (DSBs), it is ubiquitinated through 'Lys-63' linkage of ubiquitin moieties, leading to the recruitment of repair proteins to sites of DNA damage. H2AK119Ub and ionizing radiation-induced 'Lys-63'-linked ubiquitination are distinct events. Phosphorylation on Ser-2 is enhanced during mitosis. Phosphorylation on Ser-2 directly represses transcription. In terms of processing, glutamine methylation at Gln-105 (H2AQ104me) by FBL is specifically dedicated to polymerase I. It is present at 35S ribosomal DNA locus and impairs binding of the FACT complex. As to expression, expressed and secreted by skin epithelium.

It is found in the nucleus. The protein localises to the chromosome. Functionally, core component of nucleosome. Nucleosomes wrap and compact DNA into chromatin, limiting DNA accessibility to the cellular machineries which require DNA as a template. Histones thereby play a central role in transcription regulation, DNA repair, DNA replication and chromosomal stability. DNA accessibility is regulated via a complex set of post-translational modifications of histones, also called histone code, and nucleosome remodeling. In terms of biological role, the secreted form has antibacterial activity against Gram-positive bacteria and antifungal activity against S.cerevisiae. The chain is Histone H2A from Oncorhynchus mykiss (Rainbow trout).